A 227-amino-acid polypeptide reads, in one-letter code: Urease accessory protein UreF (227 aa).

The protein belongs to the UreF family. As to quaternary structure, ureD, UreF and UreG form a complex that acts as a GTP-hydrolysis-dependent molecular chaperone, activating the urease apoprotein by helping to assemble the nickel containing metallocenter of UreC. The UreE protein probably delivers the nickel.

It is found in the cytoplasm. Required for maturation of urease via the functional incorporation of the urease nickel metallocenter. This is Urease accessory protein UreF from Blochmanniella floridana.